Consider the following 64-residue polypeptide: Prokaryotic ubiquitin-like protein Pup (64 aa).

The segment at 20-58 (QELTLAASHVVSDVSEVDDLLDEIDGLLAENAEDFVTGF) is ARC ATPase binding. Glu-64 is covalently cross-linked (Isoglutamyl lysine isopeptide (Glu-Lys) (interchain with K-? in acceptor proteins)).

The protein belongs to the prokaryotic ubiquitin-like protein family. Strongly interacts with the proteasome-associated ATPase ARC through a hydrophobic interface; the interacting region of Pup lies in its C-terminal half. There is one Pup binding site per ARC hexamer ring.

Its pathway is protein degradation; proteasomal Pup-dependent pathway. Functionally, protein modifier that is covalently attached to lysine residues of substrate proteins, thereby targeting them for proteasomal degradation. The tagging system is termed pupylation. The sequence is that of Prokaryotic ubiquitin-like protein Pup from Rothia mucilaginosa (strain DY-18) (Stomatococcus mucilaginosus).